The primary structure comprises 249 residues: Phosphatidylglycerol--prolipoprotein diacylglyceryl transferase (249 aa).

7 consecutive transmembrane segments (helical) span residues Leu11–Leu31, Ala49–Ile69, Leu82–Tyr102, Leu116–Gly136, Leu163–Trp183, Gly192–Leu212, and Leu223–Ile243. Position 129 (Arg129) interacts with a 1,2-diacyl-sn-glycero-3-phospho-(1'-sn-glycerol).

The protein belongs to the Lgt family.

The protein localises to the cell membrane. It carries out the reaction L-cysteinyl-[prolipoprotein] + a 1,2-diacyl-sn-glycero-3-phospho-(1'-sn-glycerol) = an S-1,2-diacyl-sn-glyceryl-L-cysteinyl-[prolipoprotein] + sn-glycerol 1-phosphate + H(+). It participates in protein modification; lipoprotein biosynthesis (diacylglyceryl transfer). Functionally, catalyzes the transfer of the diacylglyceryl group from phosphatidylglycerol to the sulfhydryl group of the N-terminal cysteine of a prolipoprotein, the first step in the formation of mature lipoproteins. This is Phosphatidylglycerol--prolipoprotein diacylglyceryl transferase from Clostridium tetani (strain Massachusetts / E88).